A 316-amino-acid polypeptide reads, in one-letter code: 4-hydroxy-3-methylbut-2-enyl diphosphate reductase (316 aa).

A [4Fe-4S] cluster-binding site is contributed by Cys-12. 2 residues coordinate (2E)-4-hydroxy-3-methylbut-2-enyl diphosphate: His-41 and His-74. Dimethylallyl diphosphate contacts are provided by His-41 and His-74. The isopentenyl diphosphate site is built by His-41 and His-74. Cys-96 provides a ligand contact to [4Fe-4S] cluster. His-124 contacts (2E)-4-hydroxy-3-methylbut-2-enyl diphosphate. His-124 lines the dimethylallyl diphosphate pocket. Position 124 (His-124) interacts with isopentenyl diphosphate. Glu-126 serves as the catalytic Proton donor. Thr-167 is a binding site for (2E)-4-hydroxy-3-methylbut-2-enyl diphosphate. Cys-197 provides a ligand contact to [4Fe-4S] cluster. Positions 225, 226, 227, and 269 each coordinate (2E)-4-hydroxy-3-methylbut-2-enyl diphosphate. Positions 225, 226, 227, and 269 each coordinate dimethylallyl diphosphate. Residues Ser-225, Ser-226, Asn-227, and Ser-269 each contribute to the isopentenyl diphosphate site.

Belongs to the IspH family. In terms of assembly, homodimer. [4Fe-4S] cluster is required as a cofactor.

It carries out the reaction isopentenyl diphosphate + 2 oxidized [2Fe-2S]-[ferredoxin] + H2O = (2E)-4-hydroxy-3-methylbut-2-enyl diphosphate + 2 reduced [2Fe-2S]-[ferredoxin] + 2 H(+). It catalyses the reaction dimethylallyl diphosphate + 2 oxidized [2Fe-2S]-[ferredoxin] + H2O = (2E)-4-hydroxy-3-methylbut-2-enyl diphosphate + 2 reduced [2Fe-2S]-[ferredoxin] + 2 H(+). It participates in isoprenoid biosynthesis; dimethylallyl diphosphate biosynthesis; dimethylallyl diphosphate from (2E)-4-hydroxy-3-methylbutenyl diphosphate: step 1/1. Its pathway is isoprenoid biosynthesis; isopentenyl diphosphate biosynthesis via DXP pathway; isopentenyl diphosphate from 1-deoxy-D-xylulose 5-phosphate: step 6/6. Catalyzes the conversion of 1-hydroxy-2-methyl-2-(E)-butenyl 4-diphosphate (HMBPP) into a mixture of isopentenyl diphosphate (IPP) and dimethylallyl diphosphate (DMAPP). Acts in the terminal step of the DOXP/MEP pathway for isoprenoid precursor biosynthesis. The polypeptide is 4-hydroxy-3-methylbut-2-enyl diphosphate reductase (Shigella flexneri serotype 5b (strain 8401)).